Here is a 290-residue protein sequence, read N- to C-terminus: 4-hydroxy-tetrahydrodipicolinate synthase (290 aa).

Residue Thr-44 participates in pyruvate binding. The active-site Proton donor/acceptor is the Tyr-132. Lys-160 (schiff-base intermediate with substrate) is an active-site residue. Ile-202 contributes to the pyruvate binding site.

The protein belongs to the DapA family. Homotetramer; dimer of dimers.

The protein resides in the cytoplasm. The catalysed reaction is L-aspartate 4-semialdehyde + pyruvate = (2S,4S)-4-hydroxy-2,3,4,5-tetrahydrodipicolinate + H2O + H(+). It functions in the pathway amino-acid biosynthesis; L-lysine biosynthesis via DAP pathway; (S)-tetrahydrodipicolinate from L-aspartate: step 3/4. Functionally, catalyzes the condensation of (S)-aspartate-beta-semialdehyde [(S)-ASA] and pyruvate to 4-hydroxy-tetrahydrodipicolinate (HTPA). The chain is 4-hydroxy-tetrahydrodipicolinate synthase from Trichlorobacter lovleyi (strain ATCC BAA-1151 / DSM 17278 / SZ) (Geobacter lovleyi).